A 452-amino-acid chain; its full sequence is UPF0210 protein PTH_0987 (452 aa).

Belongs to the UPF0210 family. Homodimer.

In Pelotomaculum thermopropionicum (strain DSM 13744 / JCM 10971 / SI), this protein is UPF0210 protein PTH_0987.